The primary structure comprises 339 residues: Anthranilate phosphoribosyltransferase (339 aa).

Residues glycine 80, glycine 83 to aspartate 84, threonine 88, asparagine 90 to threonine 93, lysine 108 to serine 116, and serine 120 contribute to the 5-phospho-alpha-D-ribose 1-diphosphate site. Anthranilate is bound at residue glycine 80. Position 92 (serine 92) interacts with Mg(2+). Anthranilate is bound at residue asparagine 111. Arginine 166 provides a ligand contact to anthranilate. The Mg(2+) site is built by aspartate 225 and glutamate 226.

The protein belongs to the anthranilate phosphoribosyltransferase family. As to quaternary structure, homodimer. It depends on Mg(2+) as a cofactor.

The catalysed reaction is N-(5-phospho-beta-D-ribosyl)anthranilate + diphosphate = 5-phospho-alpha-D-ribose 1-diphosphate + anthranilate. It functions in the pathway amino-acid biosynthesis; L-tryptophan biosynthesis; L-tryptophan from chorismate: step 2/5. Catalyzes the transfer of the phosphoribosyl group of 5-phosphorylribose-1-pyrophosphate (PRPP) to anthranilate to yield N-(5'-phosphoribosyl)-anthranilate (PRA). The sequence is that of Anthranilate phosphoribosyltransferase from Desulfosudis oleivorans (strain DSM 6200 / JCM 39069 / Hxd3) (Desulfococcus oleovorans).